Here is a 306-residue protein sequence, read N- to C-terminus: Lipoyl synthase (306 aa).

7 residues coordinate [4Fe-4S] cluster: Cys-52, Cys-57, Cys-63, Cys-78, Cys-82, Cys-85, and Ser-289. Residues 64-278 (WNRKTATYML…KETAYKIGFK (215 aa)) form the Radical SAM core domain.

The protein belongs to the radical SAM superfamily. Lipoyl synthase family. [4Fe-4S] cluster is required as a cofactor.

The protein resides in the cytoplasm. It carries out the reaction [[Fe-S] cluster scaffold protein carrying a second [4Fe-4S](2+) cluster] + N(6)-octanoyl-L-lysyl-[protein] + 2 oxidized [2Fe-2S]-[ferredoxin] + 2 S-adenosyl-L-methionine + 4 H(+) = [[Fe-S] cluster scaffold protein] + N(6)-[(R)-dihydrolipoyl]-L-lysyl-[protein] + 4 Fe(3+) + 2 hydrogen sulfide + 2 5'-deoxyadenosine + 2 L-methionine + 2 reduced [2Fe-2S]-[ferredoxin]. The protein operates within protein modification; protein lipoylation via endogenous pathway; protein N(6)-(lipoyl)lysine from octanoyl-[acyl-carrier-protein]: step 2/2. In terms of biological role, catalyzes the radical-mediated insertion of two sulfur atoms into the C-6 and C-8 positions of the octanoyl moiety bound to the lipoyl domains of lipoate-dependent enzymes, thereby converting the octanoylated domains into lipoylated derivatives. The protein is Lipoyl synthase of Leptospira biflexa serovar Patoc (strain Patoc 1 / Ames).